A 475-amino-acid polypeptide reads, in one-letter code: Glycogen synthase (475 aa).

Lys-15 is a binding site for ADP-alpha-D-glucose.

The protein belongs to the glycosyltransferase 1 family. Bacterial/plant glycogen synthase subfamily.

The enzyme catalyses [(1-&gt;4)-alpha-D-glucosyl](n) + ADP-alpha-D-glucose = [(1-&gt;4)-alpha-D-glucosyl](n+1) + ADP + H(+). The protein operates within glycan biosynthesis; glycogen biosynthesis. Synthesizes alpha-1,4-glucan chains using ADP-glucose. This Chlamydia caviae (strain ATCC VR-813 / DSM 19441 / 03DC25 / GPIC) (Chlamydophila caviae) protein is Glycogen synthase.